The sequence spans 218 residues: Cytidylate kinase (218 aa).

11-19 (GPGASGKGT) serves as a coordination point for ATP.

This sequence belongs to the cytidylate kinase family. Type 1 subfamily.

The protein localises to the cytoplasm. The catalysed reaction is CMP + ATP = CDP + ADP. The enzyme catalyses dCMP + ATP = dCDP + ADP. This is Cytidylate kinase from Neisseria meningitidis serogroup A / serotype 4A (strain DSM 15465 / Z2491).